Consider the following 4836-residue polypeptide: E3 ubiquitin-protein ligase HERC2 (4836 aa).

Positions 58-90 (LPLRKDDGVDAQSGTKKEDLNDKEKKEEEETPA) are disordered. The span at 72-85 (TKKEDLNDKEKKEE) shows a compositional bias: basic and acidic residues. Thr273 carries the phosphothreonine modification. Residues 416–462 (PTSHKGSLQEVIGWGLIGWKYYANVIGPIQCEGLASLGVMQVACAEK) form an RCC1 1-1 repeat. Residues 463 to 513 (RFLILSRNGRVYTQAYNSDMLAPQLVQGLASRNIVKIAAHSDGHHYLALAA) form an RCC1 1-2 repeat. The RCC1 1-3 repeat unit spans residues 514 to 569 (TGEVYSWGCGDGGRLGHGDTVPLEEPKVISAFSGKQAGKHVVHIACGSTYSAAITA). The RCC1 1-4 repeat unit spans residues 570-621 (EGELYTWGRGNYGRLGHGSSEDEAIPMLVAGLKGLKVIDVACGSGDAQTLAV). The stretch at 624–675 (NGQVWSWGDGDYGKLGRGGSDGCKTPKLIEKLQDLDVIKVRCGSQFSIALTK) is one RCC1 1-5 repeat. At Thr648 the chain carries Phosphothreonine. The stretch at 676 to 727 (DGQVYSWGKGDNQRLGHGTEEHVRYPKLLEGLQGKKVIDVAAGSTHCLALTE) is one RCC1 1-6 repeat. The stretch at 729 to 779 (SEVHSWGSNDQCQHFDTLRVTKPEPTALPGLDSKHIVGIACGPAQSFAWSS) is one RCC1 1-7 repeat. A coiled-coil region spans residues 948-981 (ALNAAITAEIQDIEAKKEAQKEKEIDEQEASAST). The Cytochrome b5 heme-binding domain occupies 1208–1284 (VTLIRKADLE…MHAFCVGQYL (77 aa)). Ser1578 carries the post-translational modification Phosphoserine. The 74-residue stretch at 1860-1933 (SGPELAAMMK…KYDLKLVELP (74 aa)) folds into the MIB/HERC2 domain. A Phosphoserine modification is found at Ser1943. Residue Thr1945 is modified to Phosphothreonine. Positions 2351–2376 (GTGTLQTDDGAAASPDLGDMSPEGPQ) are disordered. A Phosphoserine modification is found at Ser2455. The 77-residue stretch at 2555–2631 (RADFLSNDDY…RYIHVELIGY (77 aa)) folds into the CPH domain. Residues 2704–2756 (HPGVTCDGCQTFPINGSRFKCRNCDDFDFCETCFKTKKHNTRHTFGRINEPGQ) form a ZZ-type zinc finger. Positions 2709, 2712, 2724, 2727, 2733, 2736, 2742, and 2746 each coordinate Zn(2+). Residues 2760–2937 (FCGRSGKQLK…ASDNEEEEDD (178 aa)) enclose the DOC domain. The segment at 2928–2947 (ASDNEEEEDDKGSTGSLIRK) is disordered. The residue at position 2929 (Ser2929) is a Phosphoserine. The RCC1 2-1 repeat unit spans residues 2959–3010 (RTKVFVWGLNDKDQLGGLKGSKIKVPSFSETLSALNVVQVAGGSKSLFAVTV). The RCC1 2-2 repeat unit spans residues 3011 to 3065 (EGKVYSCGEATNGRLGLGMSSGTVPIPRQITALSSYVVKKVAVHSGGRHATALTV). An RCC1 2-3 repeat occupies 3066–3117 (DGKVFSWGEGDDGKLGHFSRMNCDKPRLIEALKTKRIRDIACGSSHSAALTS). An RCC1 2-4 repeat occupies 3119-3169 (GELYTWGLGEYGRLGHGDNTTQLKPKMVKVLLGHRVIQVACGSRDAQTLAL). One copy of the RCC1 2-5 repeat lies at 3172–3223 (EGLVFSWGDGDFGKLGRGGSEGCNIPQNIERLNGQGVCQIECGAQFSLALTK). The RCC1 2-6 repeat unit spans residues 3225–3275 (GVVWTWGKGDYFRLGHGSDVHVRKPQVVEGLRGKKIVHVAVGALHCLAVTD). Residues 3276–3327 (SGQVYAWGDNDHGQQGNGTTTVNRKPTLVQGLEGQKITRVACGSSHSVAWTT) form an RCC1 2-7 repeat. 3 disordered regions span residues 3479-3499 (DAVT…RPFI), 3517-3537 (KTKE…QSLD), and 3604-3632 (SQSG…SGTV). The span at 3480 to 3495 (AVTPSAVTPSAPSASS) shows a compositional bias: low complexity. 2 stretches are compositionally biased toward polar residues: residues 3604-3613 (SQSGRLSSQP) and 3620-3631 (HPYTDDTSTSGT). The RCC1 3-1 repeat unit spans residues 3953-4004 (SGTIYGWGHNHRGQLGGIEGAKVKVPTPCEALATLRPVQLIGGEQTLFAVTA). One copy of the RCC1 3-2 repeat lies at 4006 to 4058 (GKLYATGYGAGGRLGIGGTESVSTPTLLESIQHVFIKKVAVNSGGKHCLALSS). An RCC1 3-3 repeat occupies 4060–4110 (GEVYSWGEAEDGKLGHGNRSPCDRPRVIESLRGIEVVDVAAGGAHSACVTA). An RCC1 3-4 repeat occupies 4112–4164 (GDLYTWGKGRYGRLGHSDSEDQLKPKLVEALQGHRVIDIACGSGDAQTLCLTD). An RCC1 3-5 repeat occupies 4166–4216 (DTVWSWGDGDYGKLGRGGSDGCKVPMKIDSLTGLGVVKVECGSQFSVALTK). An RCC1 3-6 repeat occupies 4218–4268 (GAVYTWGKGDYHRLGHGSDDHVRRPRQVQGLQGKKVIAIATGSLHCVCCTE). The stretch at 4270–4320 (GEVYTWGDNDEGQLGDGTTNAIQRPRLVAALQGKKVNRVACGSAHTLAWST) is one RCC1 3-7 repeat. Residues 4459 to 4796 (DSLLLPHRVW…IHFCKSIDTD (338 aa)) enclose the HECT domain. Residue Cys4764 is the Glycyl thioester intermediate of the active site. Positions 4806–4836 (EPAADDSSEDSDNEDADSFASDSTQDYLTGH) are disordered. Residues 4808–4822 (AADDSSEDSDNEDAD) are compositionally biased toward acidic residues. 3 positions are modified to phosphoserine: Ser4812, Ser4813, and Ser4816. Thr4829 is subject to Phosphothreonine.

As to quaternary structure, interacts (when phosphorylated at Thr-4829 and sumoylated) with RNF8 (via FHA domain); this interaction increases after ionising radiation (IR) treatment. Interacts with XPA. Interacts with NEURL4. Via its interaction with NEURL4, may indirectly interact with CCP110 and CEP97. In terms of processing, phosphorylation at Thr-4829 is required for interaction with RNF8. Sumoylated with SUMO1 by PIAS4 in response to double-strand breaks (DSBs), promoting the interaction with RNF8. Highest levels are found in brain and testis with lower levels in heart, lung, liver, skeletal muscle and kidney. Little expression detected in spleen.

The protein resides in the cytoplasm. It is found in the cytoskeleton. Its subcellular location is the microtubule organizing center. It localises to the centrosome. The protein localises to the centriole. The protein resides in the nucleus. The catalysed reaction is S-ubiquitinyl-[E2 ubiquitin-conjugating enzyme]-L-cysteine + [acceptor protein]-L-lysine = [E2 ubiquitin-conjugating enzyme]-L-cysteine + N(6)-ubiquitinyl-[acceptor protein]-L-lysine.. It participates in protein modification; protein ubiquitination. E3 ubiquitin-protein ligase that regulates ubiquitin-dependent retention of repair proteins on damaged chromosomes. Recruited to sites of DNA damage in response to ionizing radiation (IR) and facilitates the assembly of UBE2N and RNF8 promoting DNA damage-induced formation of 'Lys-63'-linked ubiquitin chains. Acts as a mediator of binding specificity between UBE2N and RNF8. Involved in the maintenance of RNF168 levels. E3 ubiquitin-protein ligase that promotes the ubiquitination and proteasomal degradation of XPA which influences the circadian oscillation of DNA excision repair activity. By controlling the steady-state expression of the IGF1R receptor, indirectly regulates the insulin-like growth factor receptor signaling pathway. Also modulates iron metabolism by regulating the basal turnover of FBXL5. This chain is E3 ubiquitin-protein ligase HERC2, found in Mus musculus (Mouse).